Reading from the N-terminus, the 630-residue chain is RRTKRFASLSRFVETLVVADDKMAAFHGAGLKHYLLTVMAAAAKAFKHPSIRNPVNLVVTRLVILGSGQEVPQVGPSAAQTLRSFCTWQKGLNPPNDSDPDHFDTAILFTRQDLCGVSTCDALGMAGVGTVCDPARSCAIVEDDGLQSAFTAAHELGHVFNMLHDNSKPCANLNGQGSSSRHVMAPVMAHVDPEEPWSPCSARFITDFLDNGYGHCLLDKPEAPLHLPVTFPGKDYDADRQCQLTFGPDSSHCPQLPPPCAALWCFGHLNGHAMCQTKHSPWADGTPCGPAQACMGGRCLHVDQLKDFNIPQAGGWGPWGPWGDCSRTCGGGVQFSSRDCTKPVPRNGGKYCEGRRTPFRSCNTKNCPHGSALTFREEQCAAYNHRTDLFKSFPGPMDWVPRYTGVAPRDQCKLTCQARALGYYYVLEPRVADGTPCSPDSSSVCVQGRCIHAGCDRIIGSKKKFDKCMVCGGNGSSCSKQSGSFKKFRYGYSDVVTIPAGRTHILVRQQGGSGLKSIYLALKLADGSYALNGEYTLMPSSTDVVLPGAVSLRYSGRTAASETLSGHGPLAQPLTLQVLVAGNPQNVRLRYSFFVPRPVPSTPRPPPQNWLQRRAEILEILRKRTWAGRK.

The propeptide occupies 1 to 5 (RRTKR). Residues 11–221 (RFVETLVVAD…GYGHCLLDKP (211 aa)) enclose the Peptidase M12B domain. Intrachain disulfides connect cysteine 86–cysteine 138, cysteine 115–cysteine 120, cysteine 132–cysteine 216, cysteine 170–cysteine 200, cysteine 242–cysteine 265, cysteine 253–cysteine 275, cysteine 260–cysteine 294, cysteine 288–cysteine 299, cysteine 325–cysteine 362, cysteine 329–cysteine 367, and cysteine 340–cysteine 352. Asparagine 96 carries an N-linked (GlcNAc...) asparagine glycan. Position 154 (histidine 154) interacts with Zn(2+). The active site involves glutamate 155. Positions 158 and 164 each coordinate Zn(2+). The region spanning 233–303 (GKDYDADRQC…CMGGRCLHVD (71 aa)) is the Disintegrin domain. Residues 313-368 (AGGWGPWGPWGDCSRTCGGGVQFSSRDCTKPVPRNGGKYCEGRRTPFRSCNTKNCP) enclose the TSP type-1 domain. The N-linked (GlcNAc...) asparagine glycan is linked to asparagine 474. The tract at residues 479–630 (SKQSGSFKKF…LRKRTWAGRK (152 aa)) is spacer.

As to quaternary structure, interacts with SRPX2. Zn(2+) serves as cofactor. Post-translationally, the precursor is cleaved by a furin endopeptidase. Glycosylated. Can be O-fucosylated by POFUT2 on a serine or a threonine residue found within the consensus sequence C1-X(2)-(S/T)-C2-G of the TSP type-1 repeat domains where C1 and C2 are the first and second cysteine residue of the repeat, respectively. Fucosylated repeats can then be further glycosylated by the addition of a beta-1,3-glucose residue by the glucosyltransferase, B3GALTL. Fucosylation mediates the efficient secretion of ADAMTS family members. Can also be C-glycosylated with one or two mannose molecules on tryptophan residues within the consensus sequence W-X-X-W of the TPRs, and N-glycosylated. These other glycosylations can also facilitate secretion. As to expression, brain specific.

Its subcellular location is the secreted. It is found in the extracellular space. The protein localises to the extracellular matrix. The catalysed reaction is Glutamyl endopeptidase. Bonds cleaved include 370-Thr-Glu-Gly-Glu-|-Ala-Arg-Gly-Ser-377 in the interglobular domain of mammalian aggrecan.. Functionally, cleaves aggrecan, a cartilage proteoglycan, at the '392-Glu-|-Ala-393' site and may be involved in its turnover. Also cleaves COMP. May play an important role in the destruction of aggrecan in arthritic diseases. This chain is A disintegrin and metalloproteinase with thrombospondin motifs 4 (Adamts4), found in Rattus norvegicus (Rat).